Here is a 375-residue protein sequence, read N- to C-terminus: tRNA/tmRNA (uracil-C(5))-methyltransferase (375 aa).

Positions 197, 225, 230, 246, and 306 each coordinate S-adenosyl-L-methionine. Cysteine 331 functions as the Nucleophile in the catalytic mechanism. The Proton acceptor role is filled by glutamate 365.

It belongs to the class I-like SAM-binding methyltransferase superfamily. RNA M5U methyltransferase family. TrmA subfamily.

It carries out the reaction uridine(54) in tRNA + S-adenosyl-L-methionine = 5-methyluridine(54) in tRNA + S-adenosyl-L-homocysteine + H(+). The catalysed reaction is uridine(341) in tmRNA + S-adenosyl-L-methionine = 5-methyluridine(341) in tmRNA + S-adenosyl-L-homocysteine + H(+). Functionally, dual-specificity methyltransferase that catalyzes the formation of 5-methyluridine at position 54 (m5U54) in all tRNAs, and that of position 341 (m5U341) in tmRNA (transfer-mRNA). The sequence is that of tRNA/tmRNA (uracil-C(5))-methyltransferase from Aliarcobacter butzleri (strain RM4018) (Arcobacter butzleri).